Here is a 173-residue protein sequence, read N- to C-terminus: Translation initiation factor IF-3 (173 aa).

The protein belongs to the IF-3 family. In terms of assembly, monomer.

The protein localises to the cytoplasm. Its function is as follows. IF-3 binds to the 30S ribosomal subunit and shifts the equilibrium between 70S ribosomes and their 50S and 30S subunits in favor of the free subunits, thus enhancing the availability of 30S subunits on which protein synthesis initiation begins. This is Translation initiation factor IF-3 from Enterococcus faecalis (strain ATCC 700802 / V583).